A 291-amino-acid chain; its full sequence is Porphobilinogen deaminase (291 aa).

Cys237 carries the S-(dipyrrolylmethanemethyl)cysteine modification.

This sequence belongs to the HMBS family. In terms of assembly, monomer. Dipyrromethane serves as cofactor.

The catalysed reaction is 4 porphobilinogen + H2O = hydroxymethylbilane + 4 NH4(+). It functions in the pathway porphyrin-containing compound metabolism; protoporphyrin-IX biosynthesis; coproporphyrinogen-III from 5-aminolevulinate: step 2/4. In terms of biological role, tetrapolymerization of the monopyrrole PBG into the hydroxymethylbilane pre-uroporphyrinogen in several discrete steps. This is Porphobilinogen deaminase from Clostridium perfringens (strain SM101 / Type A).